Here is a 510-residue protein sequence, read N- to C-terminus: Sucrose transport protein SUC4 (510 aa).

A disordered region spans residues 1-34 (MATSDQDRRHRVTRNRPPIARPSTSSSRPVVSPP). At 1 to 45 (MATSDQDRRHRVTRNRPPIARPSTSSSRPVVSPPRSKVSKRVLLR) the chain is on the cytoplasmic side. Residues 21–34 (RPSTSSSRPVVSPP) show a composition bias toward low complexity. S23 is subject to Phosphoserine. A helical membrane pass occupies residues 46 to 66 (VASVACGIQFGWALQLSLLTP). Residues 67–71 (YVQEL) lie on the Extracellular side of the membrane. A helical transmembrane segment spans residues 72 to 92 (GIPHAWASVIWLCGPLSGLFV). The Cytoplasmic segment spans residues 93–111 (QPLVGHSSDRCTSKYGRRR). A helical membrane pass occupies residues 112 to 132 (PFIVAGAVAISISVMVIGHAA). Topologically, residues 133–148 (DIGWAFGDREGKIKPR) are extracellular. A helical membrane pass occupies residues 149–169 (AIVAFVLGFWILDVANNMTQG). Residues 170 to 187 (PCRALLADLTENDNRRTR) lie on the Cytoplasmic side of the membrane. A helical membrane pass occupies residues 188 to 208 (VANGYFSLFMAVGNVLGYATG). Topologically, residues 209 to 233 (SYNGWYKIFTFTKTVACNVECANLK) are extracellular. A helical transmembrane segment spans residues 234-254 (SAFYIDVVFIAITTILSVSAA). Over 255 to 291 (HEVPLASLASEAHGQTSGTDEAFLSEIFGTFRYFPGN) the chain is Cytoplasmic. The helical transmembrane segment at 292-312 (VWIILLVTALTWIGWFPFILF) threads the bilayer. Over 313–335 (DTDWMGREIYGGEPNIGTSYSAG) the chain is Extracellular. A helical transmembrane segment spans residues 336–356 (VSMGALGLMLNSVFLGITSVL). The Cytoplasmic portion of the chain corresponds to 357-365 (MEKLCRKWG). A helical transmembrane segment spans residues 366–386 (AGFVWGISNILMAICFLGMII). Over 387–402 (TSFVASHLGYIGHEQP) the chain is Extracellular. The chain crosses the membrane as a helical span at residues 403 to 423 (PASIVFAAVLIFTILGIPLAI). Residues 424–443 (TYSVPYALISIRIESLGLGQ) are Cytoplasmic-facing. Residues 444–464 (GLSLGVLNLAIVIPQVIVSVG) traverse the membrane as a helical segment. Residues 465–477 (SGPWDQLFGGGNS) lie on the Extracellular side of the membrane. Residues 478 to 498 (PALAVGAATGFIGGIVAILAL) form a helical membrane-spanning segment. The Cytoplasmic segment spans residues 499-510 (PRTRIQKPIPLP).

Belongs to the glycoside-pentoside-hexuronide (GPH) cation symporter transporter (TC 2.A.2.4) family. Homodimer. Interacts with SUC2 and SUC3. In terms of tissue distribution, expressed in sink tissues, mostly in minor veins of sink leaves. Localized in companion cells.

It localises to the cell membrane. The catalysed reaction is sucrose(out) + H(+)(out) = sucrose(in) + H(+)(in). Its pathway is glycan biosynthesis; sucrose metabolism. In terms of biological role, responsible for the transport of sucrose into the cell, with the concomitant uptake of protons (symport system). Can also transport maltose at a lesser rate. May also transport biotin. The protein is Sucrose transport protein SUC4 of Arabidopsis thaliana (Mouse-ear cress).